The sequence spans 495 residues: GTPase Der (495 aa).

EngA-type G domains lie at 3–166 and 208–381; these read PVIA…MDAE and IKLA…DCST. Residues 9 to 16, 56 to 60, 118 to 121, 214 to 221, 261 to 265, and 326 to 329 each bind GTP; these read GRPNVGKS, DTGGI, NKTD, DTAGV, and NKWD. In terms of domain architecture, KH-like spans 382–466; sequence KRVGTSLLTR…PIRIQFKEGE (85 aa).

This sequence belongs to the TRAFAC class TrmE-Era-EngA-EngB-Septin-like GTPase superfamily. EngA (Der) GTPase family. As to quaternary structure, associates with the 50S ribosomal subunit.

Its function is as follows. GTPase that plays an essential role in the late steps of ribosome biogenesis. This Yersinia pseudotuberculosis serotype O:3 (strain YPIII) protein is GTPase Der.